We begin with the raw amino-acid sequence, 314 residues long: Mycothiol acetyltransferase (314 aa).

N-acetyltransferase domains are found at residues 18-156 and 168-314; these read ATIR…RPLA and IRIA…MYQL. Glu-38 is a binding site for 1D-myo-inositol 2-(L-cysteinylamino)-2-deoxy-alpha-D-glucopyranoside. 92-94 contacts acetyl-CoA; the sequence is VVV. Positions 195, 234, and 248 each coordinate 1D-myo-inositol 2-(L-cysteinylamino)-2-deoxy-alpha-D-glucopyranoside. Residues 252 to 254 and 259 to 265 each bind acetyl-CoA; these read VGL and QGHGLGR. Tyr-286 lines the 1D-myo-inositol 2-(L-cysteinylamino)-2-deoxy-alpha-D-glucopyranoside pocket.

The protein belongs to the acetyltransferase family. MshD subfamily. Monomer.

It carries out the reaction 1D-myo-inositol 2-(L-cysteinylamino)-2-deoxy-alpha-D-glucopyranoside + acetyl-CoA = mycothiol + CoA + H(+). Functionally, catalyzes the transfer of acetyl from acetyl-CoA to desacetylmycothiol (Cys-GlcN-Ins) to form mycothiol. The polypeptide is Mycothiol acetyltransferase (Catenulispora acidiphila (strain DSM 44928 / JCM 14897 / NBRC 102108 / NRRL B-24433 / ID139908)).